The following is a 451-amino-acid chain: Enolase (451 aa).

Gln-163 contacts (2R)-2-phosphoglycerate. Catalysis depends on Glu-205, which acts as the Proton donor. 3 residues coordinate Mg(2+): Asp-258, Glu-308, and Asp-335. (2R)-2-phosphoglycerate-binding residues include Lys-360, Arg-389, Ser-390, and Lys-411. Lys-360 functions as the Proton acceptor in the catalytic mechanism.

Belongs to the enolase family. Requires Mg(2+) as cofactor.

It is found in the cytoplasm. It localises to the secreted. The protein resides in the cell surface. It catalyses the reaction (2R)-2-phosphoglycerate = phosphoenolpyruvate + H2O. Its pathway is carbohydrate degradation; glycolysis; pyruvate from D-glyceraldehyde 3-phosphate: step 4/5. In terms of biological role, catalyzes the reversible conversion of 2-phosphoglycerate (2-PG) into phosphoenolpyruvate (PEP). It is essential for the degradation of carbohydrates via glycolysis. This is Enolase from Mycoplasma capricolum subsp. capricolum (strain California kid / ATCC 27343 / NCTC 10154).